Here is a 615-residue protein sequence, read N- to C-terminus: 1-deoxy-D-xylulose-5-phosphate synthase (615 aa).

Thiamine diphosphate is bound by residues histidine 72 and 111 to 113; that span reads GHS. Aspartate 142 provides a ligand contact to Mg(2+). Residues 143 to 144, asparagine 171, tyrosine 278, and glutamate 360 each bind thiamine diphosphate; that span reads GA. Residue asparagine 171 coordinates Mg(2+).

It belongs to the transketolase family. DXPS subfamily. As to quaternary structure, homodimer. The cofactor is Mg(2+). It depends on thiamine diphosphate as a cofactor.

The catalysed reaction is D-glyceraldehyde 3-phosphate + pyruvate + H(+) = 1-deoxy-D-xylulose 5-phosphate + CO2. The protein operates within metabolic intermediate biosynthesis; 1-deoxy-D-xylulose 5-phosphate biosynthesis; 1-deoxy-D-xylulose 5-phosphate from D-glyceraldehyde 3-phosphate and pyruvate: step 1/1. In terms of biological role, catalyzes the acyloin condensation reaction between C atoms 2 and 3 of pyruvate and glyceraldehyde 3-phosphate to yield 1-deoxy-D-xylulose-5-phosphate (DXP). This chain is 1-deoxy-D-xylulose-5-phosphate synthase, found in Campylobacter jejuni subsp. jejuni serotype O:2 (strain ATCC 700819 / NCTC 11168).